We begin with the raw amino-acid sequence, 260 residues long: Multiple myeloma tumor-associated protein 2 homolog (260 aa).

The span at 1–11 (MFGSNRGGVRG) shows a compositional bias: gly residues. The segment at 1-21 (MFGSNRGGVRGGQDQFNWEDV) is disordered. Glycyl lysine isopeptide (Lys-Gly) (interchain with G-Cter in SUMO2) cross-links involve residues Lys22, Lys104, and Lys113. Basic and acidic residues predominate over residues 106–116 (EGGDPEEKGVD). 2 disordered regions span residues 106-133 (EGGDPEEKGVDRLLGLGSASGSAGRVAL) and 146-260 (SVFT…SSDD). Over residues 117 to 132 (RLLGLGSASGSAGRVA) the composition is skewed to low complexity. Ser123 and Ser127 each carry phosphoserine. Basic and acidic residues predominate over residues 170–182 (RAEDKVEPDAESH). Over residues 183–206 (KKSKKEKKKKKKKHKKHKKKKDKE) the composition is skewed to basic residues. Phosphoserine occurs at positions 215, 216, and 219.

This is Multiple myeloma tumor-associated protein 2 homolog (Mmtag2) from Mus musculus (Mouse).